The primary structure comprises 1029 residues: Tyrosine-protein kinase-like otk (1029 aa).

Residues 1–18 form the signal peptide; the sequence is MISIYGLVMALMMASVLA. Topologically, residues 19–577 are extracellular; the sequence is SSSRFQRVPQ…GGDGFLVTRA (559 aa). Ig-like C2-type domains follow at residues 21 to 110, 109 to 195, 247 to 361, 364 to 459, and 464 to 554; these read SRFQ…AKLS, LSVI…RVMS, PEDL…APIS, PGIL…VAIN, and PKFS…VQLV. Asn-35 is a glycosylation site (N-linked (GlcNAc...) asparagine). 4 disulfides stabilise this stretch: Cys-42–Cys-91, Cys-133–Cys-184, Cys-272–Cys-350, and Cys-395–Cys-443. 7 N-linked (GlcNAc...) asparagine glycosylation sites follow: Asn-332, Asn-413, Asn-425, Asn-440, Asn-453, Asn-508, and Asn-520. A disulfide bridge links Cys-486 with Cys-538. Residues 578 to 598 form a helical membrane-spanning segment; the sequence is VLITMTVALAYIVLVVGLMLW. Topologically, residues 599–1029 are cytoplasmic; it reads CRYRRQARKA…LSKAMQSAEK (431 aa). Disordered stretches follow at residues 613–675 and 714–756; these read LSTK…KKSA and SPSD…KTSM. The segment covering 651-669 has biased composition (polar residues); that stretch reads KSSGDAQKSDDTACSQQSR. Phosphoserine is present on Ser-674. A Protein kinase; inactive domain is found at 688 to 1024; sequence LSELIQIGRG…QLGAALSKAM (337 aa). A compositionally biased stretch (basic and acidic residues) spans 716-727; sequence SDKDADTEKQHS.

Belongs to the protein kinase superfamily. Tyr protein kinase family. Insulin receptor subfamily. Interacts with plexA; component of a receptor complex that mediates the repulsive signaling in response to Semaphorin ligands.

Its subcellular location is the cell membrane. Acts as a calcium-dependent, homophilic cell adhesion molecule that regulates neural recognition during the development of the nervous system. Component of the repulsive Plexin signaling response to regulate motor axon guidance at the embryonic stage. Also component of a receptor complex that is required in the adult visual system to innervate the lamina layer; specific targeting of R1-R6 axons. The chain is Tyrosine-protein kinase-like otk from Drosophila simulans (Fruit fly).